The primary structure comprises 465 residues: tRNA modification GTPase MnmE (465 aa).

The (6S)-5-formyl-5,6,7,8-tetrahydrofolate site is built by Arg21, Glu85, and Lys124. A TrmE-type G domain is found at 220–387 (GVPVAIIGET…LQQRLVAAAH (168 aa)). Asn230 lines the K(+) pocket. GTP contacts are provided by residues 230-235 (NAGKST), 249-255 (SDIHGTT), and 274-277 (DTAG). Ser234 is a binding site for Mg(2+). Residues Ser249, Ile251, and Thr254 each contribute to the K(+) site. Thr255 is a binding site for Mg(2+). Lys465 contributes to the (6S)-5-formyl-5,6,7,8-tetrahydrofolate binding site.

The protein belongs to the TRAFAC class TrmE-Era-EngA-EngB-Septin-like GTPase superfamily. TrmE GTPase family. In terms of assembly, homodimer. Heterotetramer of two MnmE and two MnmG subunits. K(+) is required as a cofactor.

The protein resides in the cytoplasm. Exhibits a very high intrinsic GTPase hydrolysis rate. Involved in the addition of a carboxymethylaminomethyl (cmnm) group at the wobble position (U34) of certain tRNAs, forming tRNA-cmnm(5)s(2)U34. This chain is tRNA modification GTPase MnmE, found in Bacteroides fragilis (strain YCH46).